The following is a 426-amino-acid chain: Adenylosuccinate synthetase (426 aa).

Residues 13–19 (GDEGKGK) and 41–43 (GHT) contribute to the GTP site. D14 (proton acceptor) is an active-site residue. Residues D14 and G41 each coordinate Mg(2+). Residues 14-17 (DEGK), 39-42 (NAGH), T129, R143, Q224, T239, and R303 each bind IMP. H42 serves as the catalytic Proton donor. 299–305 (TTTGRPR) lines the substrate pocket. GTP-binding positions include R305, 331–333 (KLD), and 414–416 (GTG).

It belongs to the adenylosuccinate synthetase family. Homodimer. Mg(2+) is required as a cofactor.

Its subcellular location is the cytoplasm. The catalysed reaction is IMP + L-aspartate + GTP = N(6)-(1,2-dicarboxyethyl)-AMP + GDP + phosphate + 2 H(+). The protein operates within purine metabolism; AMP biosynthesis via de novo pathway; AMP from IMP: step 1/2. In terms of biological role, plays an important role in the de novo pathway of purine nucleotide biosynthesis. Catalyzes the first committed step in the biosynthesis of AMP from IMP. In Caldicellulosiruptor bescii (strain ATCC BAA-1888 / DSM 6725 / KCTC 15123 / Z-1320) (Anaerocellum thermophilum), this protein is Adenylosuccinate synthetase.